The sequence spans 4625 residues: Dynein-1-alpha heavy chain, flagellar inner arm I1 complex (4625 aa).

The stem stretch occupies residues Met1–Lys1919. The span at Glu70–Asp84 shows a compositional bias: acidic residues. The disordered stretch occupies residues Glu70–Lys163. The span at Glu111–Ala140 shows a compositional bias: low complexity. Over residues Gly144 to Glu155 the composition is skewed to acidic residues. Ala960–Ser967 lines the ATP pocket. Coiled coils occupy residues Glu1227 to Thr1259 and Thr1339 to Gln1409. AAA stretches follow at residues Tyr1920–Met2141, Asp2201–Lys2437, Glu2550–Gly2800, and Asn2906–Tyr3155. Residues Gly1958–Thr1965, Gly2242–Thr2249, Gly2588–Ser2595, and Gly2945–Gln2952 contribute to the ATP site. Coiled-coil stretches lie at residues Leu3192 to Tyr3297 and Lys3400 to Asp3494. Residues Leu3192–Asp3494 are stalk. AAA stretches follow at residues Leu3542–Glu3773 and Ile3998–Thr4216. An ATP-binding site is contributed by Gly3680–Thr3687. Residues Glu3701–Thr3788 adopt a coiled-coil conformation.

The protein belongs to the dynein heavy chain family. In terms of assembly, the I1 inner arm complex (also known as the f dynein complex) is a two-headed isoform composed of two heavy chains (1-alpha and 1-beta), three intermediate chains and three light chains. I1 occupies a specific position proximal to the first radial spoke and repeats every 96 nm along the length of the axoneme.

The protein localises to the cell projection. Its subcellular location is the cilium. The protein resides in the flagellum. It is found in the cytoplasm. It localises to the cytoskeleton. The protein localises to the flagellum axoneme. Its function is as follows. Force generating protein of eukaryotic cilia and flagella. Produces force towards the minus ends of microtubules. Dynein has ATPase activity; the force-producing power stroke is thought to occur on release of ADP. Required for assembly of the I1 inner arm complex and its targeting to the appropriate axoneme location. Also required for phototaxis. The chain is Dynein-1-alpha heavy chain, flagellar inner arm I1 complex (DHC1) from Chlamydomonas reinhardtii (Chlamydomonas smithii).